The following is a 271-amino-acid chain: WUSCHEL-related homeobox 6 (271 aa).

The segment at residues 57–121 (AATLRWNPTP…NHKARERLKR (65 aa)) is a DNA-binding region (homeobox; WUS-type). The disordered stretch occupies residues 118–195 (RLKRRRREGG…TEESDQRASE (78 aa)). Basic and acidic residues-rich tracts occupy residues 132–148 (PHKD…RVDQ) and 180–195 (NEDH…RASE).

Belongs to the WUS homeobox family. In terms of tissue distribution, highly expressed in developing ovules. Present in developing primordia and differentiating organs but absent in mature organs.

The protein localises to the nucleus. Transcription factor that plays a central role in ovule patterning by regulating cell proliferation of the maternal integuments and differentiation of the maegaspore mother cell (MCC). Involved in AGAMOUS (AG) repression in leaves. In Arabidopsis thaliana (Mouse-ear cress), this protein is WUSCHEL-related homeobox 6 (WOX6).